The sequence spans 164 residues: ATP synthase subunit b (164 aa).

Residues 6 to 26 (GELVGNFILVTGSVIVLLLLI) form a helical membrane-spanning segment.

This sequence belongs to the ATPase B chain family. F-type ATPases have 2 components, F(1) - the catalytic core - and F(0) - the membrane proton channel. F(1) has five subunits: alpha(3), beta(3), gamma(1), delta(1), epsilon(1). F(0) has three main subunits: a(1), b(2) and c(10-14). The alpha and beta chains form an alternating ring which encloses part of the gamma chain. F(1) is attached to F(0) by a central stalk formed by the gamma and epsilon chains, while a peripheral stalk is formed by the delta and b chains.

Its subcellular location is the cell membrane. Its function is as follows. F(1)F(0) ATP synthase produces ATP from ADP in the presence of a proton or sodium gradient. F-type ATPases consist of two structural domains, F(1) containing the extramembraneous catalytic core and F(0) containing the membrane proton channel, linked together by a central stalk and a peripheral stalk. During catalysis, ATP synthesis in the catalytic domain of F(1) is coupled via a rotary mechanism of the central stalk subunits to proton translocation. Functionally, component of the F(0) channel, it forms part of the peripheral stalk, linking F(1) to F(0). The polypeptide is ATP synthase subunit b (Streptococcus pyogenes serotype M12 (strain MGAS2096)).